Reading from the N-terminus, the 239-residue chain is Uridylate kinase (239 aa).

Residue 10–13 (KLSG) coordinates ATP. A UMP-binding site is contributed by Gly52. ATP is bound by residues Gly53 and Arg57. Residues Asp72 and 133 to 140 (TGNPFFTT) each bind UMP. Residues Thr160, Tyr166, and Asp169 each coordinate ATP.

It belongs to the UMP kinase family. In terms of assembly, homohexamer.

It is found in the cytoplasm. The enzyme catalyses UMP + ATP = UDP + ADP. Its pathway is pyrimidine metabolism; CTP biosynthesis via de novo pathway; UDP from UMP (UMPK route): step 1/1. With respect to regulation, inhibited by UTP. In terms of biological role, catalyzes the reversible phosphorylation of UMP to UDP. This is Uridylate kinase from Porphyromonas gingivalis (strain ATCC BAA-308 / W83).